Consider the following 486-residue polypeptide: FAD-dependent oxidoreductase domain-containing protein 1 (486 aa).

A helical membrane pass occupies residues 62 to 82 (EHSDVVIVGGGVLGLSVAYWL).

In terms of assembly, associates with components of the mitochondrial respiratory chain complex I. FAD serves as cofactor.

Its subcellular location is the mitochondrion inner membrane. Functionally, required for the assembly of the mitochondrial membrane respiratory chain NADH dehydrogenase (Complex I). Involved in mid-late stages of complex I assembly. The polypeptide is FAD-dependent oxidoreductase domain-containing protein 1 (Homo sapiens (Human)).